The following is a 938-amino-acid chain: Phosphoenolpyruvate carboxylase (938 aa).

Catalysis depends on residues His-151 and Lys-591.

This sequence belongs to the PEPCase type 1 family. Mg(2+) is required as a cofactor.

The catalysed reaction is oxaloacetate + phosphate = phosphoenolpyruvate + hydrogencarbonate. Its function is as follows. Forms oxaloacetate, a four-carbon dicarboxylic acid source for the tricarboxylic acid cycle. This Roseiflexus castenholzii (strain DSM 13941 / HLO8) protein is Phosphoenolpyruvate carboxylase.